Consider the following 86-residue polypeptide: UPF0297 protein STH1998 (86 aa).

This sequence belongs to the UPF0297 family.

The chain is UPF0297 protein STH1998 from Symbiobacterium thermophilum (strain DSM 24528 / JCM 14929 / IAM 14863 / T).